Reading from the N-terminus, the 194-residue chain is Calcium-binding protein J (194 aa).

EF-hand domains are found at residues 62–97 and 98–133; these read WDKD…MTKA and PVVE…AVAC. Ca(2+)-binding residues include Asp75, Asp77, Asn79, Glu86, Asp111, Asp113, Ser115, His117, and Glu122.

It belongs to the recoverin family.

This Dictyostelium discoideum (Social amoeba) protein is Calcium-binding protein J (cbpJ).